Reading from the N-terminus, the 325-residue chain is Lipoyl synthase (325 aa).

The tract at residues 1–32 (MPPLADASTETLSPAEQAAVRHPEKAHRPDQP) is disordered. Residues 19–32 (AVRHPEKAHRPDQP) show a composition bias toward basic and acidic residues. [4Fe-4S] cluster-binding residues include Cys66, Cys71, Cys77, Cys92, Cys96, Cys99, and Ser305. The Radical SAM core domain maps to 78–294 (WAKKHATFMI…AEVANAKGFL (217 aa)).

It belongs to the radical SAM superfamily. Lipoyl synthase family. The cofactor is [4Fe-4S] cluster.

It localises to the cytoplasm. The enzyme catalyses [[Fe-S] cluster scaffold protein carrying a second [4Fe-4S](2+) cluster] + N(6)-octanoyl-L-lysyl-[protein] + 2 oxidized [2Fe-2S]-[ferredoxin] + 2 S-adenosyl-L-methionine + 4 H(+) = [[Fe-S] cluster scaffold protein] + N(6)-[(R)-dihydrolipoyl]-L-lysyl-[protein] + 4 Fe(3+) + 2 hydrogen sulfide + 2 5'-deoxyadenosine + 2 L-methionine + 2 reduced [2Fe-2S]-[ferredoxin]. It participates in protein modification; protein lipoylation via endogenous pathway; protein N(6)-(lipoyl)lysine from octanoyl-[acyl-carrier-protein]: step 2/2. Functionally, catalyzes the radical-mediated insertion of two sulfur atoms into the C-6 and C-8 positions of the octanoyl moiety bound to the lipoyl domains of lipoate-dependent enzymes, thereby converting the octanoylated domains into lipoylated derivatives. The sequence is that of Lipoyl synthase from Beijerinckia indica subsp. indica (strain ATCC 9039 / DSM 1715 / NCIMB 8712).